A 699-amino-acid polypeptide reads, in one-letter code: tRNA 5-methylaminomethyl-2-thiouridine biosynthesis bifunctional protein MnmC (699 aa).

Positions 1 to 260 (MTAKPHISCQ…ERKLLRQQAN (260 aa)) are tRNA (mnm(5)s(2)U34)-methyltransferase. The tract at residues 282-699 (IGGGLASAHL…LRKLLKGKAL (418 aa)) is FAD-dependent cmnm(5)s(2)U34 oxidoreductase.

The protein in the N-terminal section; belongs to the methyltransferase superfamily. tRNA (mnm(5)s(2)U34)-methyltransferase family. It in the C-terminal section; belongs to the DAO family. Requires FAD as cofactor.

The protein localises to the cytoplasm. It catalyses the reaction 5-aminomethyl-2-thiouridine(34) in tRNA + S-adenosyl-L-methionine = 5-methylaminomethyl-2-thiouridine(34) in tRNA + S-adenosyl-L-homocysteine + H(+). Catalyzes the last two steps in the biosynthesis of 5-methylaminomethyl-2-thiouridine (mnm(5)s(2)U) at the wobble position (U34) in tRNA. Catalyzes the FAD-dependent demodification of cmnm(5)s(2)U34 to nm(5)s(2)U34, followed by the transfer of a methyl group from S-adenosyl-L-methionine to nm(5)s(2)U34, to form mnm(5)s(2)U34. This is tRNA 5-methylaminomethyl-2-thiouridine biosynthesis bifunctional protein MnmC from Shewanella oneidensis (strain ATCC 700550 / JCM 31522 / CIP 106686 / LMG 19005 / NCIMB 14063 / MR-1).